We begin with the raw amino-acid sequence, 96 residues long: Large ribosomal subunit protein eL14 (96 aa).

The protein belongs to the eukaryotic ribosomal protein eL14 family.

This is Large ribosomal subunit protein eL14 from Saccharolobus islandicus (strain M.14.25 / Kamchatka #1) (Sulfolobus islandicus).